The sequence spans 344 residues: Dihydroorotate dehydrogenase (quinone) (344 aa).

FMN is bound by residues 61 to 65 (AGLDK) and threonine 85. Substrate is bound at residue lysine 65. 110 to 114 (NRMGF) contacts substrate. Residues asparagine 138 and asparagine 171 each contribute to the FMN site. Position 171 (asparagine 171) interacts with substrate. The Nucleophile role is filled by serine 174. Residue asparagine 176 coordinates substrate. Positions 216 and 244 each coordinate FMN. 245 to 246 (NT) lines the substrate pocket. FMN contacts are provided by residues glycine 267, glycine 296, and 317-318 (YS).

It belongs to the dihydroorotate dehydrogenase family. Type 2 subfamily. Monomer. It depends on FMN as a cofactor.

It localises to the cell membrane. It carries out the reaction (S)-dihydroorotate + a quinone = orotate + a quinol. The protein operates within pyrimidine metabolism; UMP biosynthesis via de novo pathway; orotate from (S)-dihydroorotate (quinone route): step 1/1. Catalyzes the conversion of dihydroorotate to orotate with quinone as electron acceptor. The polypeptide is Dihydroorotate dehydrogenase (quinone) (Psychrobacter arcticus (strain DSM 17307 / VKM B-2377 / 273-4)).